The chain runs to 413 residues: tRNA (guanine-N(7)-)-methyltransferase non-catalytic subunit WDR4 (413 aa).

Ala2 is modified (N-acetylalanine). 5 WD repeats span residues 61-100 (TGSD…CLSV), 102-141 (MVVR…GCGR), 145-185 (GHLS…IESF), 188-228 (GHTE…QLQC), and 289-329 (TFPH…WQAA). Positions 380 to 413 (RLQQQLKKKRQRSPFPGSPEQTKKACPGQSALSC) are disordered. Phosphoserine occurs at positions 392 and 412.

This sequence belongs to the WD repeat TRM82 family. Non-catalytic component of the METTL1-WDR4 complex, composed of METTL1 and WDR4. Interacts with FEN1; the interaction is direct.

It localises to the nucleus. The protein localises to the chromosome. It participates in tRNA modification; N(7)-methylguanine-tRNA biosynthesis. Functionally, non-catalytic component of the METTL1-WDR4 methyltransferase complex required for the formation of N(7)-methylguanine in a subset of RNA species, such as tRNAs, mRNAs and microRNAs (miRNAs). In the METTL1-WDR4 methyltransferase complex, WDR4 acts as a scaffold for tRNA-binding. Required for the formation of N(7)-methylguanine at position 46 (m7G46) in a large subset of tRNAs that contain the 5'-RAGGU-3' motif within the variable loop. M7G46 interacts with C13-G22 in the D-loop to stabilize tRNA tertiary structure and protect tRNAs from decay. Also required for the formation of N(7)-methylguanine at internal sites in a subset of mRNAs. Also required for methylation of a specific subset of miRNAs, such as let-7. Acts as a regulator of embryonic stem cell self-renewal and differentiation. Independently of METTL1, also plays a role in genome stability: localizes at the DNA replication site and regulates endonucleolytic activities of FEN1. The polypeptide is tRNA (guanine-N(7)-)-methyltransferase non-catalytic subunit WDR4 (Mus musculus (Mouse)).